The following is a 368-amino-acid chain: GTPase Obg (368 aa).

An Obg domain is found at 1–159; the sequence is MQFIDQAEIE…RQLRLELKLL (159 aa). Residues 160-328 form the OBG-type G domain; sequence AEVGIIGLPN…LMQLVWQWLD (169 aa). GTP contacts are provided by residues 166–173, 191–195, 213–216, 280–283, and 309–311; these read GLPNAGKS, FTTLV, DIPG, NKID, and SAA. Residues Ser173 and Thr193 each contribute to the Mg(2+) site.

This sequence belongs to the TRAFAC class OBG-HflX-like GTPase superfamily. OBG GTPase family. In terms of assembly, monomer. Mg(2+) serves as cofactor.

Its subcellular location is the cytoplasm. Its function is as follows. An essential GTPase which binds GTP, GDP and possibly (p)ppGpp with moderate affinity, with high nucleotide exchange rates and a fairly low GTP hydrolysis rate. Plays a role in control of the cell cycle, stress response, ribosome biogenesis and in those bacteria that undergo differentiation, in morphogenesis control. The polypeptide is GTPase Obg (Synechocystis sp. (strain ATCC 27184 / PCC 6803 / Kazusa)).